Here is a 1479-residue protein sequence, read N- to C-terminus: Type VII secretion system protein EssC (1479 aa).

Over 1–229 the chain is Cytoplasmic; sequence MHKLIIKYNK…RPPQPIQKNN (229 aa). A helical membrane pass occupies residues 230–252; sequence TVIWRSIIPPLVMIALTVVIFLV. Residues 253–256 lie on the Extracellular side of the membrane; it reads RPIG. The chain crosses the membrane as a helical span at residues 257 to 279; the sequence is IYILMMIGMSTVTIVFGITTYFS. The Cytoplasmic segment spans residues 280–1479; sequence EKKKYNKDVE…QAYQKIRWFK (1200 aa). 2 FtsK domains span residues 652-846 and 997-1183; these read DDIL…QDSN and QGPM…SEVS. Residues 672–679 and 1014–1021 each bind ATP; these read GTTGSGKS and GSPGYGRT.

It belongs to the EssC family. Homooligomer. Interacts with EsaE.

The protein resides in the cell membrane. Component of the type VII secretion system (Ess). Required for the secretion of substrates including EsxA and EsxB. However, unable to support secretion of the substrate protein EsxC. The chain is Type VII secretion system protein EssC from Staphylococcus aureus (strain Mu50 / ATCC 700699).